Reading from the N-terminus, the 582-residue chain is Probable DNA ligase (582 aa).

Glu-243 serves as a coordination point for ATP. The active-site N6-AMP-lysine intermediate is the Lys-245. ATP is bound by residues Arg-250, Arg-265, Glu-295, Phe-335, Arg-410, and Lys-416.

It belongs to the ATP-dependent DNA ligase family. The cofactor is Mg(2+).

It catalyses the reaction ATP + (deoxyribonucleotide)n-3'-hydroxyl + 5'-phospho-(deoxyribonucleotide)m = (deoxyribonucleotide)n+m + AMP + diphosphate.. In terms of biological role, DNA ligase that seals nicks in double-stranded DNA during DNA replication, DNA recombination and DNA repair. This chain is Probable DNA ligase, found in Dictyoglomus turgidum (strain DSM 6724 / Z-1310).